Here is a 514-residue protein sequence, read N- to C-terminus: Type-2 serine--tRNA ligase (514 aa).

Residue A313 coordinates L-serine. C315 serves as a coordination point for Zn(2+). R344 is a binding site for L-serine. ATP-binding positions include 344–346 (RWE) and 355–356 (RV). 361–363 (RGE) provides a ligand contact to L-serine. Zn(2+)-binding residues include E363 and C470. ATP is bound at residue R477.

Belongs to the class-II aminoacyl-tRNA synthetase family. Type-2 seryl-tRNA synthetase subfamily. In terms of assembly, homodimer. Zn(2+) serves as cofactor.

It is found in the cytoplasm. The enzyme catalyses tRNA(Ser) + L-serine + ATP = L-seryl-tRNA(Ser) + AMP + diphosphate + H(+). It catalyses the reaction tRNA(Sec) + L-serine + ATP = L-seryl-tRNA(Sec) + AMP + diphosphate + H(+). It functions in the pathway aminoacyl-tRNA biosynthesis; selenocysteinyl-tRNA(Sec) biosynthesis; L-seryl-tRNA(Sec) from L-serine and tRNA(Sec): step 1/1. Functionally, catalyzes the attachment of serine to tRNA(Ser). Is also able to aminoacylate tRNA(Sec) with serine, to form the misacylated tRNA L-seryl-tRNA(Sec), which will be further converted into selenocysteinyl-tRNA(Sec). The protein is Type-2 serine--tRNA ligase of Methanococcus maripaludis (strain C6 / ATCC BAA-1332).